The primary structure comprises 624 residues: UvrABC system protein C (624 aa).

The 80-residue stretch at 25 to 104 (AEPGVYFMRD…IKQHQPHFNV (80 aa)) folds into the GIY-YIG domain. The 36-residue stretch at 214 to 249 (SELIDTLTPQMEAAAENLNFEQAARIRDQINGLKTL) folds into the UVR domain.

Belongs to the UvrC family. As to quaternary structure, interacts with UvrB in an incision complex.

The protein localises to the cytoplasm. Its function is as follows. The UvrABC repair system catalyzes the recognition and processing of DNA lesions. UvrC both incises the 5' and 3' sides of the lesion. The N-terminal half is responsible for the 3' incision and the C-terminal half is responsible for the 5' incision. This chain is UvrABC system protein C, found in Cyanothece sp. (strain PCC 7425 / ATCC 29141).